The primary structure comprises 435 residues: MTVADRAPLDVAIIGGGIIGIMTALGLLHRGFRVTVYERAASWPEIGAAFAFTGVARQCMERLDPRVLESLARVAQRSPHEKVRYWDGFHPRTKEAAQEESAVLFEILEKHMAYWACIRGHFLLDMAAQLPDGVVQFGKRLVDYNDDEANEKVVLCFADGSTAESDVVIACDGIHSATRKVLLGVDHPAANASYSRKSMYRAMVPMADAVSALGTEKAHVQIAHLGPDAHVVSFPVNNGQVYNVFLFLHDPNEWDHGHTMTVPSSRSEVMDAIQGWGPHIKEIVSCFPETVSKYAIFDQADNPLPYYASGRVCLAGDAAHASSPFHGAGACMGVEDALVLAELLGLVDAGPVAARQRNIKAALQTYSSVRIERSQWLVQSSRDMGDLYEWRYPPTGEDGAKCKAEFERRSKVIWDFDVDGMVAGAKKKYEHSMEA.

Residues 8 to 28 form a helical membrane-spanning segment; that stretch reads PLDVAIIGGGIIGIMTALGLL. FAD contacts are provided by glutamate 38, alanine 51, and arginine 119. An N-linked (GlcNAc...) asparagine glycan is attached at asparagine 191. Arginine 201 is a catalytic residue. Aspartate 317 and alanine 330 together coordinate FAD.

It belongs to the paxM FAD-dependent monooxygenase family. Requires FAD as cofactor.

It is found in the membrane. The protein operates within secondary metabolite biosynthesis. Its function is as follows. FAD-dependent monooxygenase; part of the cluster B that mediates the biosynthesis of azasperpyranones, members of the azaphilone family that exhibit anti-cancer activities. Azasperpyranones are synthesized by 2 clusters, A and B. Cluster A is responsible for the production of the polyhydric phenol moiety while the azaphilonoid scaffold is produced by the cluster B. The non-reducing polyketide synthase ATEG_03629 produces 5-methyl orsellinic acid, which is then reduced to 5-methyl orsellinic aldehyde by the NRPS-like protein ATEG_03630. 5-methyl orsellinic aldehyde is then first hydroxylated by the FAD-dependent monooxygenase ATEG_03635 and subsequently hydroxylated by the cytochrome P450 monooxygenase ATEG_03631 to produce the unstable polyhydric phenol precursor of azasperpyranones. On the other hand, the polyketide synthase ATEG_07659 is responsible for producing the 3,5-dimethyloctadienone moiety from acetyl-CoA, three malonyl-CoA, and two S-adenosyl methionines (SAM). The 3,5-dimethyloctadienone moiety is then loaded onto the SAT domain of ATEG_07661 and extended with four malonyl-CoA and one SAM, which leads to the formation of 2,4-dihydroxy-6-(5,7-dimethyl-2-oxo-trans-3-trans-5-nonadienyl)-3-methylbenzaldehyde (compound 8) after reductive release and aldol condensation. The FAD-dependent monooxygenase ATEG_07662 is the next enzyme in the biosynthesis sequence and hydroxylates the side chain at the benzylic position of compound 8. In Aspergillus nidulans, afoF, the ortholog of the FAD-dependent oxygenase ATEG_07660, is the key enzyme for the biosynthesis of asperfuranone by catalyzing the hydroxylation at C-8 of to prevent the formation of a six-membered ring hemiacetal intermediate and thus facilitating the formation of a five-membered ring to produce asperfuranone. In Aspergillus terreus, ATEG_07660 is probably not functional, which leads to the formation of the six-membered ring hemiacetal intermediate presperpyranone instead of asperfuranone. Finally, ATEG_03636 is involved in the condensation of the polyhydric phenol moiety produced by cluster A and the perasperpyranone precursor produced by cluster B, to yield azasperpyranone A. Further modifications of azasperpyranone A result in the production of derivatives, including azasperpyranone B to F. The sequence is that of FAD-dependent monooxygenase ATEG_07662 from Aspergillus terreus (strain NIH 2624 / FGSC A1156).